Here is a 345-residue protein sequence, read N- to C-terminus: Beta-2-glycoprotein 1 (345 aa).

Residues 1–19 (MISLGLILFSSVLCHVATA) form the signal peptide. Sushi domains are found at residues 21 to 81 (RTCP…RCIP), 82 to 139 (RVCP…VCTR), 140 to 202 (VTCP…ECRE), and 203 to 262 (VKCP…SCKA). Intrachain disulfides connect C23-C66, C51-C79, C84-C124, C110-C137, C142-C188, C174-C200, C205-C248, C234-C260, C264-C315, C300-C325, and C307-C345. A glycan (O-linked (GalNAc...) threonine) is linked at T33. N117, N162, N183, and N193 each carry an N-linked (GlcNAc...) asparagine glycan. N-linked (GlcNAc...) asparagine glycosylation is present at N253. Positions 263-345 (SCKLSVKKAT…KTDASDVKPC (83 aa)) are sushi-like.

Expressed by the liver and secreted in plasma.

It localises to the secreted. Its function is as follows. Binds to various kinds of negatively charged substances such as heparin, phospholipids, and dextran sulfate. May prevent activation of the intrinsic blood coagulation cascade by binding to phospholipids on the surface of damaged cells. The sequence is that of Beta-2-glycoprotein 1 (APOH) from Canis lupus familiaris (Dog).